The chain runs to 157 residues: ATP synthase subunit b 1 (157 aa).

Residues 7–29 form a helical membrane-spanning segment; that stretch reads LFGQMVTFALLVWFTMKYVWPPL.

It belongs to the ATPase B chain family. In terms of assembly, F-type ATPases have 2 components, F(1) - the catalytic core - and F(0) - the membrane proton channel. F(1) has five subunits: alpha(3), beta(3), gamma(1), delta(1), epsilon(1). F(0) has three main subunits: a(1), b(2) and c(10-14). The alpha and beta chains form an alternating ring which encloses part of the gamma chain. F(1) is attached to F(0) by a central stalk formed by the gamma and epsilon chains, while a peripheral stalk is formed by the delta and b chains.

It localises to the cell inner membrane. Functionally, f(1)F(0) ATP synthase produces ATP from ADP in the presence of a proton or sodium gradient. F-type ATPases consist of two structural domains, F(1) containing the extramembraneous catalytic core and F(0) containing the membrane proton channel, linked together by a central stalk and a peripheral stalk. During catalysis, ATP synthesis in the catalytic domain of F(1) is coupled via a rotary mechanism of the central stalk subunits to proton translocation. Component of the F(0) channel, it forms part of the peripheral stalk, linking F(1) to F(0). The protein is ATP synthase subunit b 1 of Methylococcus capsulatus (strain ATCC 33009 / NCIMB 11132 / Bath).